The chain runs to 245 residues: 1-(5-phosphoribosyl)-5-[(5-phosphoribosylamino)methylideneamino] imidazole-4-carboxamide isomerase (245 aa).

Asp-7 (proton acceptor) is an active-site residue. Residue Asp-129 is the Proton donor of the active site.

It belongs to the HisA/HisF family.

Its subcellular location is the cytoplasm. The enzyme catalyses 1-(5-phospho-beta-D-ribosyl)-5-[(5-phospho-beta-D-ribosylamino)methylideneamino]imidazole-4-carboxamide = 5-[(5-phospho-1-deoxy-D-ribulos-1-ylimino)methylamino]-1-(5-phospho-beta-D-ribosyl)imidazole-4-carboxamide. The protein operates within amino-acid biosynthesis; L-histidine biosynthesis; L-histidine from 5-phospho-alpha-D-ribose 1-diphosphate: step 4/9. The chain is 1-(5-phosphoribosyl)-5-[(5-phosphoribosylamino)methylideneamino] imidazole-4-carboxamide isomerase from Shigella flexneri serotype 5b (strain 8401).